The primary structure comprises 271 residues: MTNDTERLVVYIVSDSVGETAELVVKAAVSQFSGSNVELRRIPYVEDKGTIQEVVQIARKAKALIAFTLVVPEIRDFLLESAKAANVETVDIIGPVLSKITDLTNAKPRYEPGLIYRLDEDYFRKVEAIEFAVKYDDGRDPRGIILADIVLIGVSRTSKTPLSQYLAHKRLKVANVPLVPEVEPPEELFKISSKKCIGLKISPEKLNSIRTERLKALGLKSEANYANIDRIKEELEYAKKVMDRVNCPVIDVSNKAVEETANLISSMFQRN.

153-160 (GVSRTSKT) is a binding site for ADP.

This sequence belongs to the pyruvate, phosphate/water dikinase regulatory protein family. PDRP subfamily.

The catalysed reaction is N(tele)-phospho-L-histidyl/L-threonyl-[pyruvate, phosphate dikinase] + ADP = N(tele)-phospho-L-histidyl/O-phospho-L-threonyl-[pyruvate, phosphate dikinase] + AMP + H(+). It catalyses the reaction N(tele)-phospho-L-histidyl/O-phospho-L-threonyl-[pyruvate, phosphate dikinase] + phosphate + H(+) = N(tele)-phospho-L-histidyl/L-threonyl-[pyruvate, phosphate dikinase] + diphosphate. Its function is as follows. Bifunctional serine/threonine kinase and phosphorylase involved in the regulation of the pyruvate, phosphate dikinase (PPDK) by catalyzing its phosphorylation/dephosphorylation. The polypeptide is Putative pyruvate, phosphate dikinase regulatory protein (Shouchella clausii (strain KSM-K16) (Alkalihalobacillus clausii)).